Consider the following 22-residue polypeptide: Pectinesterase (22 aa).

D6 (proton donor) is an active-site residue. Positions 19 and 21 each coordinate substrate.

This sequence belongs to the pectinesterase family.

The protein localises to the secreted. The protein resides in the cell wall. The enzyme catalyses [(1-&gt;4)-alpha-D-galacturonosyl methyl ester](n) + n H2O = [(1-&gt;4)-alpha-D-galacturonosyl](n) + n methanol + n H(+). Its pathway is glycan metabolism; pectin degradation; 2-dehydro-3-deoxy-D-gluconate from pectin: step 1/5. The polypeptide is Pectinesterase (Capsicum chinense (Scotch bonnet)).